Here is a 271-residue protein sequence, read N- to C-terminus: 3-methyl-2-oxobutanoate hydroxymethyltransferase 2 (271 aa).

Residues Asp-53 and Asp-92 each coordinate Mg(2+). 3-methyl-2-oxobutanoate-binding positions include Asp-53–Ser-54, Asp-92, and Lys-120. Glu-122 contributes to the Mg(2+) binding site. Glu-189 (proton acceptor) is an active-site residue.

The protein belongs to the PanB family. Homodecamer; pentamer of dimers. The cofactor is Mg(2+).

Its subcellular location is the cytoplasm. The enzyme catalyses 3-methyl-2-oxobutanoate + (6R)-5,10-methylene-5,6,7,8-tetrahydrofolate + H2O = 2-dehydropantoate + (6S)-5,6,7,8-tetrahydrofolate. It functions in the pathway cofactor biosynthesis; (R)-pantothenate biosynthesis; (R)-pantoate from 3-methyl-2-oxobutanoate: step 1/2. Functionally, catalyzes the reversible reaction in which hydroxymethyl group from 5,10-methylenetetrahydrofolate is transferred onto alpha-ketoisovalerate to form ketopantoate. The polypeptide is 3-methyl-2-oxobutanoate hydroxymethyltransferase 2 (Burkholderia lata (strain ATCC 17760 / DSM 23089 / LMG 22485 / NCIMB 9086 / R18194 / 383)).